The sequence spans 90 residues: Probable Fe(2+)-trafficking protein (90 aa).

It belongs to the Fe(2+)-trafficking protein family.

In terms of biological role, could be a mediator in iron transactions between iron acquisition and iron-requiring processes, such as synthesis and/or repair of Fe-S clusters in biosynthetic enzymes. The protein is Probable Fe(2+)-trafficking protein of Pseudomonas fluorescens (strain Pf0-1).